The chain runs to 283 residues: Diaminopimelate epimerase (283 aa).

Substrate is bound by residues asparagine 11 and asparagine 65. The Proton donor role is filled by cysteine 74. Residues 75 to 76 (GN), asparagine 163, asparagine 196, and 214 to 215 (ER) contribute to the substrate site. Residue cysteine 223 is the Proton acceptor of the active site. 224–225 (GT) lines the substrate pocket.

This sequence belongs to the diaminopimelate epimerase family. In terms of assembly, homodimer.

The protein localises to the cytoplasm. It catalyses the reaction (2S,6S)-2,6-diaminopimelate = meso-2,6-diaminopimelate. The protein operates within amino-acid biosynthesis; L-lysine biosynthesis via DAP pathway; DL-2,6-diaminopimelate from LL-2,6-diaminopimelate: step 1/1. Functionally, catalyzes the stereoinversion of LL-2,6-diaminopimelate (L,L-DAP) to meso-diaminopimelate (meso-DAP), a precursor of L-lysine and an essential component of the bacterial peptidoglycan. The polypeptide is Diaminopimelate epimerase (Desulfitobacterium hafniense (strain DSM 10664 / DCB-2)).